The sequence spans 88 residues: Large ribosomal subunit protein bL27 (88 aa).

A disordered region spans residues 1 to 23 (MAHKKAGGSSRNGRDSAGRRLGV).

Belongs to the bacterial ribosomal protein bL27 family.

The sequence is that of Large ribosomal subunit protein bL27 from Methylorubrum populi (strain ATCC BAA-705 / NCIMB 13946 / BJ001) (Methylobacterium populi).